The sequence spans 70 residues: Conotoxin TxMMSK-02 (70 aa).

An N-terminal signal peptide occupies residues 1 to 20 (MMSKLGALLTICLLLFSLTA). The propeptide occupies 21-53 (VPLDGDQHADQPAQRLQDRIPTEDHPLFDPNKR). 3 disulfides stabilise this stretch: C54/C68, C55/C64, and C60/C67. P66 bears the 4-hydroxyproline mark. Y69 bears the Tyrosine amide mark.

This sequence belongs to the conotoxin M superfamily. As to expression, expressed by the venom duct.

The protein localises to the secreted. This chain is Conotoxin TxMMSK-02, found in Conus textile (Cloth-of-gold cone).